Here is a 599-residue protein sequence, read N- to C-terminus: Beta-(1--&gt;2)glucan export ATP-binding/permease protein NdvA (599 aa).

Residues 21–301 form the ABC transmembrane type-1 domain; it reads TITMCVASVL…ISAFINQTVT (281 aa). 5 consecutive transmembrane segments (helical) span residues 22–42, 55–75, 156–176, 248–268, and 276–296; these read ITMC…PVLF, IFSP…AAVF, MRMS…GQLV, MAST…VTKG, and IAFI…SAFI. One can recognise an ABC transporter domain in the interval 335-569; it reads IVFDNVTYEF…GGRFSDLLRA (235 aa). 368-375 is an ATP binding site; that stretch reads GPTGAGKT.

Belongs to the ABC transporter superfamily. Beta-(1--&gt;2)glucan exporter (TC 3.A.1.108.1) family. In terms of assembly, homodimer.

The protein resides in the cell inner membrane. The catalysed reaction is [(1-&gt;2)-beta-D-glucosyl](n)(in) + ATP + H2O = [(1-&gt;2)-beta-D-glucosyl](n)(out) + ADP + phosphate + H(+). Its function is as follows. Involved in beta-(1--&gt;2)glucan export. Transmembrane domains (TMD) form a pore in the inner membrane and the ATP-binding domain (NBD) is responsible for energy generation. This chain is Beta-(1--&gt;2)glucan export ATP-binding/permease protein NdvA, found in Brucella melitensis biotype 1 (strain ATCC 23456 / CCUG 17765 / NCTC 10094 / 16M).